A 432-amino-acid chain; its full sequence is Gamma-glutamyl phosphate reductase (432 aa).

It belongs to the gamma-glutamyl phosphate reductase family.

The protein resides in the cytoplasm. It catalyses the reaction L-glutamate 5-semialdehyde + phosphate + NADP(+) = L-glutamyl 5-phosphate + NADPH + H(+). It participates in amino-acid biosynthesis; L-proline biosynthesis; L-glutamate 5-semialdehyde from L-glutamate: step 2/2. Functionally, catalyzes the NADPH-dependent reduction of L-glutamate 5-phosphate into L-glutamate 5-semialdehyde and phosphate. The product spontaneously undergoes cyclization to form 1-pyrroline-5-carboxylate. The protein is Gamma-glutamyl phosphate reductase of Methylorubrum extorquens (strain PA1) (Methylobacterium extorquens).